A 266-amino-acid polypeptide reads, in one-letter code: MHDLATIILLGIIEGLTEFLPVSSTGHLILASEMLGFTGEGSAAFKIAIQLGAILAVLVAYRARFWGVGMGLLRADPAAVAFTRNILIGFLPAMLVGAVAYEGVRALLESPATVAVALLVGGIAILAIERMVKVVKVESVEAMPLRTAIAIGAVQCIAMIPGVSRSGATIMGALLMGVERRTAAEFSFFLAVPTMMGATAYSLWKDRAILTFDDMNAIAIGLFVAFLVALVVVKAFVAIVGRFGFAPFAWYRIIVGGGALLWLAWK.

Transmembrane regions (helical) follow at residues 4-24 (LATI…PVSS), 41-61 (GSAA…LVAY), 79-99 (AVAF…VGAV), 108-128 (LESP…ILAI), 143-163 (MPLR…IPGV), 184-204 (AEFS…YSLW), 220-240 (IGLF…VAIV), and 243-263 (FGFA…LLWL).

Belongs to the UppP family.

Its subcellular location is the cell inner membrane. The enzyme catalyses di-trans,octa-cis-undecaprenyl diphosphate + H2O = di-trans,octa-cis-undecaprenyl phosphate + phosphate + H(+). Its function is as follows. Catalyzes the dephosphorylation of undecaprenyl diphosphate (UPP). Confers resistance to bacitracin. The sequence is that of Undecaprenyl-diphosphatase from Sphingopyxis alaskensis (strain DSM 13593 / LMG 18877 / RB2256) (Sphingomonas alaskensis).